Consider the following 305-residue polypeptide: tRNA pseudouridine synthase B (305 aa).

Residue Asp-39 is the Nucleophile of the active site.

This sequence belongs to the pseudouridine synthase TruB family. Type 1 subfamily.

It carries out the reaction uridine(55) in tRNA = pseudouridine(55) in tRNA. Responsible for synthesis of pseudouridine from uracil-55 in the psi GC loop of transfer RNAs. This Staphylococcus aureus (strain bovine RF122 / ET3-1) protein is tRNA pseudouridine synthase B.